The primary structure comprises 203 residues: ATP-dependent Clp protease proteolytic subunit 1 (203 aa).

Catalysis depends on serine 103, which acts as the Nucleophile. Histidine 128 is an active-site residue.

This sequence belongs to the peptidase S14 family. In terms of assembly, fourteen ClpP subunits assemble into 2 heptameric rings which stack back to back to give a disk-like structure with a central cavity, resembling the structure of eukaryotic proteasomes.

The protein resides in the cytoplasm. The catalysed reaction is Hydrolysis of proteins to small peptides in the presence of ATP and magnesium. alpha-casein is the usual test substrate. In the absence of ATP, only oligopeptides shorter than five residues are hydrolyzed (such as succinyl-Leu-Tyr-|-NHMec, and Leu-Tyr-Leu-|-Tyr-Trp, in which cleavage of the -Tyr-|-Leu- and -Tyr-|-Trp bonds also occurs).. Cleaves peptides in various proteins in a process that requires ATP hydrolysis. Has a chymotrypsin-like activity. Plays a major role in the degradation of misfolded proteins. The chain is ATP-dependent Clp protease proteolytic subunit 1 from Treponema pallidum (strain Nichols).